The primary structure comprises 152 residues: Large ribosomal subunit protein bL9 (152 aa).

It belongs to the bacterial ribosomal protein bL9 family.

In terms of biological role, binds to the 23S rRNA. In Synechococcus sp. (strain CC9311), this protein is Large ribosomal subunit protein bL9.